The primary structure comprises 407 residues: Biotin synthase (407 aa).

The Radical SAM core domain maps to 47–277; that stretch reads WFGRRVKLNY…DVEVRIAGGR (231 aa). 3 residues coordinate [4Fe-4S] cluster: Cys-65, Cys-69, and Cys-72. [2Fe-2S] cluster-binding residues include Cys-109, Cys-142, Cys-202, and Arg-272. The tract at residues 368-407 is disordered; sequence GGGVCAPAPAATTPRPAEEPRTDLVAVRRRGAGTDLAPNA. A compositionally biased stretch (low complexity) spans 373–382; sequence APAPAATTPR.

The protein belongs to the radical SAM superfamily. Biotin synthase family. As to quaternary structure, homodimer. [4Fe-4S] cluster serves as cofactor. It depends on [2Fe-2S] cluster as a cofactor.

It carries out the reaction (4R,5S)-dethiobiotin + (sulfur carrier)-SH + 2 reduced [2Fe-2S]-[ferredoxin] + 2 S-adenosyl-L-methionine = (sulfur carrier)-H + biotin + 2 5'-deoxyadenosine + 2 L-methionine + 2 oxidized [2Fe-2S]-[ferredoxin]. It functions in the pathway cofactor biosynthesis; biotin biosynthesis; biotin from 7,8-diaminononanoate: step 2/2. In terms of biological role, catalyzes the conversion of dethiobiotin (DTB) to biotin by the insertion of a sulfur atom into dethiobiotin via a radical-based mechanism. This Streptomyces coelicolor (strain ATCC BAA-471 / A3(2) / M145) protein is Biotin synthase.